The primary structure comprises 673 residues: DNA ligase (673 aa).

NAD(+)-binding positions include 35–39 (DAEYD), 84–85 (SL), and Glu-115. Lys-117 (N6-AMP-lysine intermediate) is an active-site residue. Arg-138, Glu-175, Lys-292, and Lys-316 together coordinate NAD(+). Residues Cys-410, Cys-413, Cys-428, and Cys-434 each contribute to the Zn(2+) site. The 82-residue stretch at 592–673 (PRKLPLQGLV…FLDLLERGRP (82 aa)) folds into the BRCT domain.

The protein belongs to the NAD-dependent DNA ligase family. LigA subfamily. Mg(2+) is required as a cofactor. Mn(2+) serves as cofactor.

The enzyme catalyses NAD(+) + (deoxyribonucleotide)n-3'-hydroxyl + 5'-phospho-(deoxyribonucleotide)m = (deoxyribonucleotide)n+m + AMP + beta-nicotinamide D-nucleotide.. Its function is as follows. DNA ligase that catalyzes the formation of phosphodiester linkages between 5'-phosphoryl and 3'-hydroxyl groups in double-stranded DNA using NAD as a coenzyme and as the energy source for the reaction. It is essential for DNA replication and repair of damaged DNA. This Methylococcus capsulatus (strain ATCC 33009 / NCIMB 11132 / Bath) protein is DNA ligase.